The chain runs to 464 residues: 3-isopropylmalate dehydratase large subunit (464 aa).

Residues cysteine 345, cysteine 405, and cysteine 408 each contribute to the [4Fe-4S] cluster site.

It belongs to the aconitase/IPM isomerase family. LeuC type 1 subfamily. Heterodimer of LeuC and LeuD. [4Fe-4S] cluster serves as cofactor.

It carries out the reaction (2R,3S)-3-isopropylmalate = (2S)-2-isopropylmalate. It functions in the pathway amino-acid biosynthesis; L-leucine biosynthesis; L-leucine from 3-methyl-2-oxobutanoate: step 2/4. In terms of biological role, catalyzes the isomerization between 2-isopropylmalate and 3-isopropylmalate, via the formation of 2-isopropylmaleate. The protein is 3-isopropylmalate dehydratase large subunit of Bacteroides thetaiotaomicron (strain ATCC 29148 / DSM 2079 / JCM 5827 / CCUG 10774 / NCTC 10582 / VPI-5482 / E50).